Reading from the N-terminus, the 65-residue chain is Hirudin-3A' (65 aa).

An interaction with thrombin active site region spans residues 1–3 (VVY). Disulfide bonds link Cys-6–Cys-14, Cys-16–Cys-28, and Cys-22–Cys-39. Positions 32–65 (SDGEKNECVTGEGTPKPQSHNDGDFEEIPEEYLQ) are disordered. The O-linked (GalNAc...) threonine glycan is linked to Thr-45. An interaction with fibrinogen-binding exosite of thrombin region spans residues 55-65 (DFEEIPEEYLQ). Residues 55-65 (DFEEIPEEYLQ) are compositionally biased toward acidic residues. Tyr-63 carries the sulfotyrosine modification.

This sequence belongs to the protease inhibitor I14 (hirudin) family.

It is found in the secreted. Its function is as follows. Hirudin is a potent thrombin-specific protease inhibitor. It forms a stable non-covalent complex with alpha-thrombin, thereby abolishing its ability to cleave fibrinogen. This chain is Hirudin-3A', found in Hirudo medicinalis (Medicinal leech).